The chain runs to 555 residues: Phosphomethylpyrimidine synthase (555 aa).

The disordered stretch occupies residues 78–104 (VRDRWGFDNGSAESTKGELSMSERKPR). Substrate contacts are provided by residues Asn191, Met220, Tyr249, His285, 305–307 (SRG), 346–349 (DALR), and Glu385. His389 provides a ligand contact to Zn(2+). Substrate is bound at residue Tyr412. His453 contributes to the Zn(2+) binding site. Residues Cys535, Cys538, and Cys543 each coordinate [4Fe-4S] cluster.

This sequence belongs to the ThiC family. The cofactor is [4Fe-4S] cluster.

The enzyme catalyses 5-amino-1-(5-phospho-beta-D-ribosyl)imidazole + S-adenosyl-L-methionine = 4-amino-2-methyl-5-(phosphooxymethyl)pyrimidine + CO + 5'-deoxyadenosine + formate + L-methionine + 3 H(+). Its pathway is cofactor biosynthesis; thiamine diphosphate biosynthesis. Functionally, catalyzes the synthesis of the hydroxymethylpyrimidine phosphate (HMP-P) moiety of thiamine from aminoimidazole ribotide (AIR) in a radical S-adenosyl-L-methionine (SAM)-dependent reaction. The chain is Phosphomethylpyrimidine synthase from Chlorobaculum parvum (strain DSM 263 / NCIMB 8327) (Chlorobium vibrioforme subsp. thiosulfatophilum).